A 664-amino-acid polypeptide reads, in one-letter code: Macoilin (664 aa).

4 helical membrane-spanning segments follow: residues 28-48, 75-95, 120-140, and 154-174; these read TFLY…DFVL, AFSV…LLFI, VCLP…AIRF, and FAAH…KSYV. Basic and acidic residues predominate over residues 253 to 265; sequence REKGKEKDKDAKK. The tract at residues 253–274 is disordered; sequence REKGKEKDKDAKKHNLGINNNN. At serine 305 the chain carries Phosphoserine. A compositionally biased stretch (polar residues) spans 320–348; sequence KNYKNASGVVNSSPRSHSATNGSIPSSSS. Residues 320–375 form a disordered region; it reads KNYKNASGVVNSSPRSHSATNGSIPSSSSKNEKKQKCTSKSPSTHKDLMENCIPNN. Asparagine 324 carries N-linked (GlcNAc...) asparagine glycosylation. Serine 332 is modified (phosphoserine). Residues asparagine 340 and asparagine 452 are each glycosylated (N-linked (GlcNAc...) asparagine). The segment at 630–664 is disordered; it reads TSPLSPVSPHYSSKFVETSPSGLDPNASVYQPLKK. Phosphoserine occurs at positions 631 and 634. N-linked (GlcNAc...) asparagine glycosylation is present at asparagine 655.

This sequence belongs to the macoilin family.

The protein resides in the rough endoplasmic reticulum membrane. It localises to the nucleus membrane. Functionally, plays a role in the regulation of neuronal activity. This is Macoilin (MACO1) from Macaca mulatta (Rhesus macaque).